The sequence spans 388 residues: Formate-dependent phosphoribosylglycinamide formyltransferase (388 aa).

N(1)-(5-phospho-beta-D-ribosyl)glycinamide is bound by residues 11 to 12 (EL) and glutamate 71. Residues arginine 103, lysine 144, 149-154 (SSGKGQ), 184-187 (EEFI), and glutamate 192 contribute to the ATP site. The 193-residue stretch at 108-300 (DLAAKELGLK…EFELHLRAVL (193 aa)) folds into the ATP-grasp domain. Residues glutamate 257 and glutamate 270 each contribute to the Mg(2+) site. N(1)-(5-phospho-beta-D-ribosyl)glycinamide contacts are provided by residues aspartate 277, lysine 349, and 356 to 357 (RR).

It belongs to the PurK/PurT family. As to quaternary structure, homodimer.

It catalyses the reaction N(1)-(5-phospho-beta-D-ribosyl)glycinamide + formate + ATP = N(2)-formyl-N(1)-(5-phospho-beta-D-ribosyl)glycinamide + ADP + phosphate + H(+). Its pathway is purine metabolism; IMP biosynthesis via de novo pathway; N(2)-formyl-N(1)-(5-phospho-D-ribosyl)glycinamide from N(1)-(5-phospho-D-ribosyl)glycinamide (formate route): step 1/1. Its function is as follows. Involved in the de novo purine biosynthesis. Catalyzes the transfer of formate to 5-phospho-ribosyl-glycinamide (GAR), producing 5-phospho-ribosyl-N-formylglycinamide (FGAR). Formate is provided by PurU via hydrolysis of 10-formyl-tetrahydrofolate. In Bacteroides fragilis (strain ATCC 25285 / DSM 2151 / CCUG 4856 / JCM 11019 / LMG 10263 / NCTC 9343 / Onslow / VPI 2553 / EN-2), this protein is Formate-dependent phosphoribosylglycinamide formyltransferase.